A 142-amino-acid chain; its full sequence is MVLTAGDKANVKTVWSKVGSHLEEYGSETLERLFVVYPSTKTYFPHFDLHHDSPQVRAHGKKVLSALGEAVNHIDDIPGALSKLSDLHAQNLRVDPVNFKLLNLCFVVVSGTHHPTILTPEVHVSLDKFLSAVATALTSKYR.

In terms of domain architecture, Globin spans 2–142 (VLTAGDKANV…VATALTSKYR (141 aa)). His59 provides a ligand contact to O2. His88 is a heme b binding site.

Belongs to the globin family. As to quaternary structure, tetramer of alpha-1, alpha-2 and two identical beta chains. Red blood cells.

Functionally, involved in oxygen transport from the lung to the various peripheral tissues. The protein is Hemoglobin A subunit alpha-1 of Aldabrachelys gigantea (Aldabra giant tortoise).